The following is a 544-amino-acid chain: MIHVRRHETRRNSKSHVPEQKSRVDWRRTKRSSISQLLDSDEELDSEEFDSDEELDSDESFENDEELDSNKGPDCNKTPGSERELNLSKIQSEGNDSKCLINSGNGSTYEEETNKIKHRNIDLQDQEKHLSQEDNDLNKQTGQIIEDDQEKHLSQEDNDLNKQTGQIIEDDLEEEDIKRGKRKRLSSVMCDSDESDDSDILVRKVGVKRPRRVVEDEGSSVEMEQKTPEKTLAAQKREKLQKLKELSKQRSRQRRSSGRDFEDSEKESCPSSDEVDEEEEEDNYESDEDGDDYIIDDFVVQDEEGDEENKNQQGEKLTTSQLKLVKQNSLYSFSDHYTHFERVVKALLINALDESFLGTLYDGTRQKSYAKDMLTSLHYLDNRFVQPRLESLVSRSRWKEQYKERVENYSNVSIHLKNPENCSCQACGLHRYCKYSVHLSGELYNTRTMQIDNFMSHDKQVFTVGRICASRTRIYHKLKHFKFKLYQECCTIAMTEEVEDEQVKETVERIFRRSKENGWIKEKYGQLEEYLNFADYFQEEKFEL.

Basic residues predominate over residues 1–14 (MIHVRRHETRRNSK). A disordered region spans residues 1 to 294 (MIHVRRHETR…ESDEDGDDYI (294 aa)). Positions 16–27 (HVPEQKSRVDWR) are enriched in basic and acidic residues. Positions 39–67 (DSDEELDSEEFDSDEELDSDESFENDEEL) are enriched in acidic residues. A phosphoserine mark is found at serine 88, serine 131, serine 154, serine 195, and serine 219. A compositionally biased stretch (polar residues) spans 88-108 (SKIQSEGNDSKCLINSGNGST). The span at 112–132 (ETNKIKHRNIDLQDQEKHLSQ) shows a compositional bias: basic and acidic residues. Residues 223–248 (MEQKTPEKTLAAQKREKLQKLKELSK) are compositionally biased toward basic and acidic residues. At threonine 227 the chain carries Phosphothreonine. Positions 229–256 (EKTLAAQKREKLQKLKELSKQRSRQRRS) form a coiled coil. Acidic residues predominate over residues 273–294 (DEVDEEEEEDNYESDEDGDDYI). Serine 329 is modified (phosphoserine).

This chain is Coiled-coil domain-containing protein 82 (CCDC82), found in Homo sapiens (Human).